The primary structure comprises 335 residues: Holliday junction branch migration complex subunit RuvB (335 aa).

The tract at residues 1 to 181 (MDRIVEIEKY…FGMQFRLEFY (181 aa)) is large ATPase domain (RuvB-L). Residue leucine 20 coordinates ATP. Arginine 21, tyrosine 28, isoleucine 29, glycine 62, leucine 63, glycine 64, lysine 65, threonine 66, and threonine 67 together coordinate ADP. ATP-binding positions include 128-130 (EDY) and arginine 171. ADP is bound by residues tyrosine 181 and arginine 218. Positions 182-252 (KDSELALILQ…RANEALNSLG (71 aa)) are small ATPAse domain (RuvB-S). Positions 255–335 (ELGFDAMDLR…LNYEKTLFEE (81 aa)) are head domain (RuvB-H). DNA is bound by residues arginine 309 and arginine 314.

This sequence belongs to the RuvB family. In terms of assembly, homohexamer. Forms an RuvA(8)-RuvB(12)-Holliday junction (HJ) complex. HJ DNA is sandwiched between 2 RuvA tetramers; dsDNA enters through RuvA and exits via RuvB. An RuvB hexamer assembles on each DNA strand where it exits the tetramer. Each RuvB hexamer is contacted by two RuvA subunits (via domain III) on 2 adjacent RuvB subunits; this complex drives branch migration. In the full resolvosome a probable DNA-RuvA(4)-RuvB(12)-RuvC(2) complex forms which resolves the HJ.

The protein localises to the cytoplasm. The catalysed reaction is ATP + H2O = ADP + phosphate + H(+). The RuvA-RuvB-RuvC complex processes Holliday junction (HJ) DNA during genetic recombination and DNA repair, while the RuvA-RuvB complex plays an important role in the rescue of blocked DNA replication forks via replication fork reversal (RFR). RuvA specifically binds to HJ cruciform DNA, conferring on it an open structure. The RuvB hexamer acts as an ATP-dependent pump, pulling dsDNA into and through the RuvAB complex. RuvB forms 2 homohexamers on either side of HJ DNA bound by 1 or 2 RuvA tetramers; 4 subunits per hexamer contact DNA at a time. Coordinated motions by a converter formed by DNA-disengaged RuvB subunits stimulates ATP hydrolysis and nucleotide exchange. Immobilization of the converter enables RuvB to convert the ATP-contained energy into a lever motion, pulling 2 nucleotides of DNA out of the RuvA tetramer per ATP hydrolyzed, thus driving DNA branch migration. The RuvB motors rotate together with the DNA substrate, which together with the progressing nucleotide cycle form the mechanistic basis for DNA recombination by continuous HJ branch migration. Branch migration allows RuvC to scan DNA until it finds its consensus sequence, where it cleaves and resolves cruciform DNA. The protein is Holliday junction branch migration complex subunit RuvB of Campylobacter jejuni subsp. jejuni serotype O:2 (strain ATCC 700819 / NCTC 11168).